The primary structure comprises 354 residues: Peptide chain release factor 1 (354 aa).

Glutamine 231 is subject to N5-methylglutamine.

This sequence belongs to the prokaryotic/mitochondrial release factor family. In terms of processing, methylated by PrmC. Methylation increases the termination efficiency of RF1.

The protein resides in the cytoplasm. In terms of biological role, peptide chain release factor 1 directs the termination of translation in response to the peptide chain termination codons UAG and UAA. The sequence is that of Peptide chain release factor 1 from Acholeplasma laidlawii (strain PG-8A).